The sequence spans 623 residues: UvrABC system protein C (623 aa).

The GIY-YIG domain maps to 28–105; it reads GAPGVYRMLD…IKQLKPKYNV (78 aa). In terms of domain architecture, UVR spans 215-250; that stretch reads TRVQEELAEQMMAASEAMEFERAAALRDRIRALTTV.

The protein belongs to the UvrC family. Interacts with UvrB in an incision complex.

The protein localises to the cytoplasm. The UvrABC repair system catalyzes the recognition and processing of DNA lesions. UvrC both incises the 5' and 3' sides of the lesion. The N-terminal half is responsible for the 3' incision and the C-terminal half is responsible for the 5' incision. The sequence is that of UvrABC system protein C from Ruegeria pomeroyi (strain ATCC 700808 / DSM 15171 / DSS-3) (Silicibacter pomeroyi).